The primary structure comprises 457 residues: Argininosuccinate lyase (457 aa).

This sequence belongs to the lyase 1 family. Argininosuccinate lyase subfamily.

The protein resides in the cytoplasm. The catalysed reaction is 2-(N(omega)-L-arginino)succinate = fumarate + L-arginine. The protein operates within amino-acid biosynthesis; L-arginine biosynthesis; L-arginine from L-ornithine and carbamoyl phosphate: step 3/3. The protein is Argininosuccinate lyase of Escherichia coli O157:H7 (strain EC4115 / EHEC).